A 383-amino-acid chain; its full sequence is Homoserine O-succinyltransferase (383 aa).

The 310-residue stretch at 51 to 360 (NAILLCHALS…EAEHGHDSFL (310 aa)) folds into the AB hydrolase-1 domain. Catalysis depends on Ser-157, which acts as the Nucleophile. Residue Arg-227 coordinates substrate. Catalysis depends on residues Asp-323 and His-356. Asp-357 serves as a coordination point for substrate.

The protein belongs to the AB hydrolase superfamily. MetX family. As to quaternary structure, homodimer.

Its subcellular location is the cytoplasm. It carries out the reaction L-homoserine + succinyl-CoA = O-succinyl-L-homoserine + CoA. It functions in the pathway amino-acid biosynthesis; L-methionine biosynthesis via de novo pathway; O-succinyl-L-homoserine from L-homoserine: step 1/1. Functionally, transfers a succinyl group from succinyl-CoA to L-homoserine, forming succinyl-L-homoserine. In Acidithiobacillus ferrooxidans (strain ATCC 23270 / DSM 14882 / CIP 104768 / NCIMB 8455) (Ferrobacillus ferrooxidans (strain ATCC 23270)), this protein is Homoserine O-succinyltransferase.